Here is a 295-residue protein sequence, read N- to C-terminus: Inorganic pyrophosphatase 1 (295 aa).

Asp19 (nucleophile) is an active-site residue. Residues Asp19 and Asp21 each coordinate Mg(2+). Asp21 serves as the catalytic Proton donor. Residues Asp30 and Asp105 each contribute to the substrate site. A Mg(2+)-binding site is contributed by Asp190.

The protein belongs to the HAD-like hydrolase superfamily. Tetramer. Mg(2+) is required as a cofactor. The cofactor is Fe(2+). Requires Ni(2+) as cofactor. Co(2+) serves as cofactor. It depends on Mn(2+) as a cofactor.

It carries out the reaction diphosphate + H2O = 2 phosphate + H(+). Functionally, catalyzes the specific cleavage of pyrophosphate. In Arabidopsis thaliana (Mouse-ear cress), this protein is Inorganic pyrophosphatase 1 (PS2).